Consider the following 86-residue polypeptide: Cytochrome c oxidase subunit 6B1 (86 aa).

N-acetylalanine is present on Ala-2. Residues 27–73 (TRNCWQNYLDFHRCQKAMTAKGGDISVCEWYQRVYQSLCPTSWVTDW) enclose the CHCH domain. The short motif at 30-40 (CWQNYLDFHRC) is the Cx9C motif element. Disulfide bonds link Cys-30-Cys-65 and Cys-40-Cys-54. The Cx10C motif signature appears at 54 to 65 (CEWYQRVYQSLC).

Belongs to the cytochrome c oxidase subunit 6B family. In terms of assembly, component of the cytochrome c oxidase (complex IV, CIV), a multisubunit enzyme composed of 14 subunits. The complex is composed of a catalytic core of 3 subunits MT-CO1, MT-CO2 and MT-CO3, encoded in the mitochondrial DNA, and 11 supernumerary subunits COX4I1 (or COX4I2), COX5A, COX5B, COX6A1 (or COX6A2), COX6B1 (or COX6B2), COX6C, COX7A2 (or COX7A1), COX7B, COX7C, COX8A and NDUFA4, which are encoded in the nuclear genome. The complex exists as a monomer or a dimer and forms supercomplexes (SCs) in the inner mitochondrial membrane with NADH-ubiquinone oxidoreductase (complex I, CI) and ubiquinol-cytochrome c oxidoreductase (cytochrome b-c1 complex, complex III, CIII), resulting in different assemblies (supercomplex SCI(1)III(2)IV(1) and megacomplex MCI(2)III(2)IV(2)).

It is found in the mitochondrion inner membrane. It functions in the pathway energy metabolism; oxidative phosphorylation. In terms of biological role, component of the cytochrome c oxidase, the last enzyme in the mitochondrial electron transport chain which drives oxidative phosphorylation. The respiratory chain contains 3 multisubunit complexes succinate dehydrogenase (complex II, CII), ubiquinol-cytochrome c oxidoreductase (cytochrome b-c1 complex, complex III, CIII) and cytochrome c oxidase (complex IV, CIV), that cooperate to transfer electrons derived from NADH and succinate to molecular oxygen, creating an electrochemical gradient over the inner membrane that drives transmembrane transport and the ATP synthase. Cytochrome c oxidase is the component of the respiratory chain that catalyzes the reduction of oxygen to water. Electrons originating from reduced cytochrome c in the intermembrane space (IMS) are transferred via the dinuclear copper A center (CU(A)) of subunit 2 and heme A of subunit 1 to the active site in subunit 1, a binuclear center (BNC) formed by heme A3 and copper B (CU(B)). The BNC reduces molecular oxygen to 2 water molecules using 4 electrons from cytochrome c in the IMS and 4 protons from the mitochondrial matrix. The chain is Cytochrome c oxidase subunit 6B1 (COX6B1) from Homo sapiens (Human).